Consider the following 333-residue polypeptide: Abequosyltransferase RfbV (333 aa).

Belongs to the glycosyltransferase 2 family.

It catalyses the reaction CDP-alpha-D-abequose + alpha-D-Man-(1-&gt;4)-alpha-L-Rha-(1-&gt;3)-alpha-D-Gal-di-trans,octa-cis-undecaprenyl diphosphate = alpha-D-Abe-(1-&gt;3)-alpha-D-Man-(1-&gt;4)-alpha-L-Rha-(1-&gt;3)-alpha-D-Gal-di-trans,octa-cis-undecaprenyl diphosphate + CDP + H(+). It participates in bacterial outer membrane biogenesis; LPS O-antigen biosynthesis. Functionally, catalyzes the transfer of CDP-abequose on D-mannosyl-L-rhamnosyl-D-galactose-1-diphospholipid to yield D-abequosyl-D-mannosyl-rhamnosyl-D-galactose-1-diphospholipid. The sequence is that of Abequosyltransferase RfbV (rfbV) from Salmonella typhimurium (strain LT2 / SGSC1412 / ATCC 700720).